A 492-amino-acid polypeptide reads, in one-letter code: Beclin 1-associated autophagy-related key regulator (492 aa).

S29 is subject to Phosphoserine. Residues 70 to 180 (RDRERFIDKK…KLGDLVEKKT (111 aa)) adopt a coiled-coil conformation. 2 disordered regions span residues 213–232 (TSGR…MTSS) and 411–473 (GVAG…AGGM). A compositionally biased stretch (polar residues) spans 222-232 (SSETDSAMTSS). S416 is subject to Phosphoserine. Acidic residues predominate over residues 424 to 433 (VSDEETDLGT). Phosphothreonine is present on T429. Positions 447–473 (PSQPVEVSQSQSTQASPPIASSSAGGM) are enriched in low complexity.

This sequence belongs to the ATG14 family. Forms homooligomers; homo-oligomerization is essential for the roles in membrane tethering and enhancement of SNARE-mediated fusion. Component of the PI3K (PI3KC3/PI3K-III/class III phosphatidylinositol 3-kinase) complex I (PI3KC3-C1) in which the core composed of the catalytic subunit PIK3C3, the regulatory subunit PIK3R4 and BECN1 is associated with ATG14. PI3KC3-C1 displays a V-shaped architecture with PIK3R4 serving as a bridge between PIK3C3 and the ATG14:BECN1 subcomplex. PI3KC3-C1 can associate with further regulatory subunits. Interacts with PIK3CB. Interacts (via coiled-coil domain) with BECN2 (via coiled-coil domain); this interaction is tighter than BECN2 self-association. Interacts with the STX17-SNAP29 binary t-SNARE complex. Interacts with NRBF2. Interacts with PIK3C3 and BECN1; this interaction is increased in the absence of TMEM39A. Interacts with STEEP1; the interaction is required for trafficking of STING1 from the endoplasmic reticulum. Interacts with ARMC3 (via ARM domains). Post-translationally, ubiquitinated via 'Lys-6', 'Lys-11' and 'Lys-63'-linked polyubiquitin chains on multiple lysines by MARCHF7, leading to ATG14 aggregation and loss of interaction with STX17.

Its subcellular location is the cytoplasm. It localises to the endoplasmic reticulum membrane. The protein resides in the preautophagosomal structure membrane. Functionally, required for both basal and inducible autophagy. Determines the localization of the autophagy-specific PI3-kinase complex. Plays a role in autophagosome formation and MAP1LC3/LC3 conjugation to phosphatidylethanolamine. Promotes BECN1 translocation from the trans-Golgi network to autophagosomes. Enhances PIK3C3 activity in a BECN1-dependent manner. Essential for the autophagy-dependent phosphorylation of BECN1. Stimulates the phosphorylation of BECN1, but suppresses the phosphorylation PIK3C3 by AMPK. Binds to STX17-SNAP29 binary t-SNARE complex on autophagosomes and primes it for VAMP8 interaction to promote autophagosome-endolysosome fusion. Modulates the hepatic lipid metabolism. This is Beclin 1-associated autophagy-related key regulator from Rattus norvegicus (Rat).